The following is a 436-amino-acid chain: Calcium/calmodulin-regulated receptor-like kinase 2 (436 aa).

Residues 7 to 34 (LVVIGISVGLALGLLLALLLFFAIKWYY) traverse the membrane as a helical segment. The tract at residues 65 to 88 (DRANTESSQPPENGAPTQHQPWWN) is disordered. A compositionally biased stretch (polar residues) spans 69–88 (TESSQPPENGAPTQHQPWWN). The Protein kinase domain occupies 114 to 375 (QNFTTVLGQG…PSIGEVTQFI (262 aa)). ATP-binding positions include 120–128 (LGQGSFGPV) and Lys-142. Tyr-187 carries the phosphotyrosine modification. Asp-239 acts as the Proton acceptor in catalysis. Thr-276 is subject to Phosphothreonine. Tyr-284 carries the phosphotyrosine modification.

This sequence belongs to the protein kinase superfamily. Ser/Thr protein kinase family.

The protein resides in the cell membrane. It carries out the reaction L-seryl-[protein] + ATP = O-phospho-L-seryl-[protein] + ADP + H(+). It catalyses the reaction L-threonyl-[protein] + ATP = O-phospho-L-threonyl-[protein] + ADP + H(+). The polypeptide is Calcium/calmodulin-regulated receptor-like kinase 2 (Arabidopsis thaliana (Mouse-ear cress)).